We begin with the raw amino-acid sequence, 208 residues long: Small ribosomal subunit protein uS4 (208 aa).

The disordered stretch occupies residues 30–49 (EKRPYAPGEHGRDRRRTESD). The S4 RNA-binding domain occupies 95 to 161 (TRLDNLVLRA…VPFQIAAEGV (67 aa)).

The protein belongs to the universal ribosomal protein uS4 family. Part of the 30S ribosomal subunit. Contacts protein S5. The interaction surface between S4 and S5 is involved in control of translational fidelity.

Functionally, one of the primary rRNA binding proteins, it binds directly to 16S rRNA where it nucleates assembly of the body of the 30S subunit. Its function is as follows. With S5 and S12 plays an important role in translational accuracy. The sequence is that of Small ribosomal subunit protein uS4 from Bifidobacterium longum (strain DJO10A).